We begin with the raw amino-acid sequence, 510 residues long: 2,3-bisphosphoglycerate-independent phosphoglycerate mutase (510 aa).

Mn(2+) contacts are provided by Asp12 and Ser62. Ser62 acts as the Phosphoserine intermediate in catalysis. Substrate contacts are provided by residues His123, 153–154 (RD), Arg185, Arg191, 261–264 (RPDR), and Lys336. 5 residues coordinate Mn(2+): Asp403, His407, Asp444, His445, and His462.

It belongs to the BPG-independent phosphoglycerate mutase family. In terms of assembly, monomer. Mn(2+) is required as a cofactor.

The enzyme catalyses (2R)-2-phosphoglycerate = (2R)-3-phosphoglycerate. Its pathway is carbohydrate degradation; glycolysis; pyruvate from D-glyceraldehyde 3-phosphate: step 3/5. Its function is as follows. Essential for rapid growth and for sporulation. Catalyzes the interconversion of 2-phosphoglycerate and 3-phosphoglycerate. The protein is 2,3-bisphosphoglycerate-independent phosphoglycerate mutase of Priestia megaterium (strain ATCC 12872 / QMB1551) (Bacillus megaterium).